The primary structure comprises 217 residues: Adenylate kinase (217 aa).

Gly-10–Thr-15 provides a ligand contact to ATP. The NMP stretch occupies residues Ser-30–Val-59. AMP contacts are provided by residues Thr-31, Arg-36, Gly-57–Val-59, Gly-85–Arg-88, and Gln-92. The tract at residues Gly-122–Asp-159 is LID. ATP contacts are provided by residues Arg-123 and Thr-132–Tyr-133. Residues Arg-156 and Arg-167 each coordinate AMP. Residue Gly-203 coordinates ATP.

The protein belongs to the adenylate kinase family. In terms of assembly, monomer.

It is found in the cytoplasm. The catalysed reaction is AMP + ATP = 2 ADP. It participates in purine metabolism; AMP biosynthesis via salvage pathway; AMP from ADP: step 1/1. Catalyzes the reversible transfer of the terminal phosphate group between ATP and AMP. Plays an important role in cellular energy homeostasis and in adenine nucleotide metabolism. This chain is Adenylate kinase, found in Aromatoleum aromaticum (strain DSM 19018 / LMG 30748 / EbN1) (Azoarcus sp. (strain EbN1)).